The primary structure comprises 304 residues: N-acetyllactosaminide alpha-2,3-sialyltransferase (304 aa).

Residues 221–225 (FPHPA), 242–243 (FE), and 262–263 (SS) each bind CMP-N-acetyl-beta-neuraminate. His-223 serves as the catalytic Proton donor.

This sequence belongs to the glycosyltransferase 52 family.

It catalyses the reaction a beta-D-galactosyl-(1-&gt;4)-N-acetyl-beta-D-glucosaminyl derivative + CMP-N-acetyl-beta-neuraminate = an N-acetyl-alpha-neuraminyl-(2-&gt;3)-beta-D-galactosyl-(1-&gt;4)-N-acetyl-beta-D-glucosaminyl derivative + CMP + H(+). The protein operates within bacterial outer membrane biogenesis; lipooligosaccharide biosynthesis. Functionally, catalyzes the transfer of sialic acid from the substrate CMP-N-acetylneuraminate to the terminal galactose residue of the N-acetyllactosamine moiety of surface lipooligosaccharide (LOS). Thus, functions in the sialylation of LOS, which plays a role in the evasion of the host immune response. This Haemophilus influenzae (strain ATCC 51907 / DSM 11121 / KW20 / Rd) protein is N-acetyllactosaminide alpha-2,3-sialyltransferase.